The following is a 215-amino-acid chain: CASP-like protein 1E1 (215 aa).

At 1–51 (MESSRGKPGLNGSGGGAAAFDYSSRRGYYTGAGAALPPLAAGSRAPPVDPC) the chain is on the cytoplasmic side. A helical transmembrane segment spans residues 52–72 (CVVLRVFVLLGTLASAVVMAA). Over 73–103 (DRQSTTVQIAAGEELAPPLRVPVTAKWTYSS) the chain is Extracellular. A helical transmembrane segment spans residues 104–124 (AFVYFVVANAMVFAFSAAALA). Residues 125–130 (AVRRRS) are Cytoplasmic-facing. A helical membrane pass occupies residues 131–151 (AVVPVMVGDLVAMALLFSAVG). Over 152–185 (AAAQFGLLGERGNAHVRWAKVCDVYGPFCERAMA) the chain is Extracellular. The helical transmembrane segment at 186-206 (AVVVALIAAFADLVLLMLTIL) threads the bilayer. At 207 to 215 (TIHKASSYY) the chain is on the cytoplasmic side.

It belongs to the Casparian strip membrane proteins (CASP) family. As to quaternary structure, homodimer and heterodimers.

Its subcellular location is the cell membrane. This is CASP-like protein 1E1 from Oryza sativa subsp. japonica (Rice).